Reading from the N-terminus, the 293-residue chain is MISGIINLKKEAGMTSHDAVFKLRKILHEKKIGHGGTLDPDVTGVLPIAVGKATRVIEYMTEAGKVYEGEITIGFSTTTEDASGEVVQTTPITELDGATVDQAMASFEGEITQIPPMYSAVKINGKKLYEYARAGEEVERPQRQVKITEFVRTSPIELENGTARFTFRVACSKGTYVRTLSVDLGVKLGFASHMSALRRTASAGLTLDSSLSLSQISEMVEAGDQSFLLPIEFGVQDLPAVQVTEDDAKEISFGRFISINSQEPLVAAFLGDKVLAIMEKRGQVYKPRKVLSQ.

The active-site Nucleophile is the Asp39.

This sequence belongs to the pseudouridine synthase TruB family. Type 1 subfamily.

It catalyses the reaction uridine(55) in tRNA = pseudouridine(55) in tRNA. In terms of biological role, responsible for synthesis of pseudouridine from uracil-55 in the psi GC loop of transfer RNAs. In Streptococcus thermophilus (strain ATCC BAA-250 / LMG 18311), this protein is tRNA pseudouridine synthase B.